The sequence spans 456 residues: UDP-N-acetylglucosamine 1-carboxyvinyltransferase (456 aa).

Position 34 to 35 (34 to 35 (KN)) interacts with phosphoenolpyruvate. Arg104 contacts UDP-N-acetyl-alpha-D-glucosamine. The active-site Proton donor is Cys128. A 2-(S-cysteinyl)pyruvic acid O-phosphothioketal modification is found at Cys128. UDP-N-acetyl-alpha-D-glucosamine is bound by residues Asp319 and Ile341.

This sequence belongs to the EPSP synthase family. MurA subfamily.

Its subcellular location is the cytoplasm. The catalysed reaction is phosphoenolpyruvate + UDP-N-acetyl-alpha-D-glucosamine = UDP-N-acetyl-3-O-(1-carboxyvinyl)-alpha-D-glucosamine + phosphate. It participates in cell wall biogenesis; peptidoglycan biosynthesis. Functionally, cell wall formation. Adds enolpyruvyl to UDP-N-acetylglucosamine. The chain is UDP-N-acetylglucosamine 1-carboxyvinyltransferase from Prochlorococcus marinus (strain AS9601).